The following is a 684-amino-acid chain: Nuclear transcription factor Y subunit gamma (684 aa).

4 disordered regions span residues 1–74, 112–238, 414–487, and 511–650; these read MENQ…NIST, MNSP…SSFQ, HSPQ…TQQL, and QQQQ…KNDE. Residues 21–49 are compositionally biased toward low complexity; it reads SNSHNNHHNNNNNNNYNNNNNNNINNINN. Positions 58 to 74 are enriched in polar residues; it reads KSIQQHSPHSSTPNIST. The segment covering 142–162 has biased composition (low complexity); it reads HQHPSSASSSSSSSSSSLSSS. The span at 163–176 shows a compositional bias: basic residues; the sequence is SHHHHSNHHHHHPN. The span at 188 to 203 shows a compositional bias: polar residues; sequence PSLNDSSSNGNGTPAL. Residues 220–238 are compositionally biased toward low complexity; the sequence is TPTSTPNQRFQSNGSSSFQ. Polar residues predominate over residues 414–423; it reads HSPQLQEQSS. The span at 424 to 437 shows a compositional bias: low complexity; sequence NNNNNNNNNNNNNN. Polar residues-rich tracts occupy residues 438-456 and 464-477; these read SVSV…SPLS and SQDY…NNHN. Composition is skewed to low complexity over residues 478 to 487, 511 to 522, and 529 to 637; these read QSSLSQTQQL, QQQQHSQQISQQ, and PSNS…NNNN.

The protein belongs to the NFYC/HAP5 subunit family. Heterotrimeric transcription factor composed of three components, NF-YA, NF-YB and NF-YC. NF-YB and NF-YC must interact and dimerize for NF-YA association and DNA binding.

The protein resides in the nucleus. Its function is as follows. Stimulates the transcription of various genes by recognizing and binding to a CCAAT motif in promoters. The protein is Nuclear transcription factor Y subunit gamma (nfyc-1) of Dictyostelium discoideum (Social amoeba).